We begin with the raw amino-acid sequence, 52 residues long: Insulin (52 aa).

3 cysteine pairs are disulfide-bonded: C7/C38, C19/C51, and C37/C42.

It belongs to the insulin family. In terms of assembly, heterodimer of a B chain and an A chain linked by two disulfide bonds.

It is found in the secreted. In terms of biological role, insulin decreases blood glucose concentration. It increases cell permeability to monosaccharides, amino acids and fatty acids. It accelerates glycolysis, the pentose phosphate cycle, and glycogen synthesis in liver. This chain is Insulin (ins), found in Acipenser gueldenstaedtii (Russian sturgeon).